The sequence spans 253 residues: Kojic acid related protein 1 (253 aa).

3 consecutive transmembrane segments (helical) span residues 23-43 (PIKFLWSGALFLGVLSIFILI), 53-73 (IFYPPVSVFVHVGLFIVYIVS), and 117-137 (ALFGFTIIIIVLYFVEIIVSV). The segment at 174–253 (FPMMSPALPS…PPPPKKAAKV (80 aa)) is disordered. Composition is skewed to polar residues over residues 184–200 (GGTTQMMPTMSSRSPEF) and 226–240 (QQESSETLAPGNQPQ). Residues 242–253 (YFPPPPKKAAKV) show a composition bias toward pro residues.

Its subcellular location is the membrane. Functionally, involved in mycelium growth and repression of conidia formation by affecting the expression of brlA and abaA. Acts as a negative regulation factor for kojic acid production through affecting the expression of kojA, kojR and kojT. In Aspergillus oryzae (strain ATCC 42149 / RIB 40) (Yellow koji mold), this protein is Kojic acid related protein 1.